The following is a 282-amino-acid chain: High mobility group nucleosome-binding domain-containing protein 5 (282 aa).

The disordered stretch occupies residues 1-282 (MPKRKAAGQG…GKKEEPQSIV (282 aa)). At Thr-31 the chain carries Phosphothreonine. Basic residues predominate over residues 37–46 (KRTSSSRKMK). A Glycyl lysine isopeptide (Lys-Gly) (interchain with G-Cter in SUMO2) cross-link involves residue Lys-67. Position 76 is a phosphotyrosine (Tyr-76). Positions 81-119 (KNGEAKITEAPASEKEIVEVKEENIEDATEKGGEKKEAV) are enriched in basic and acidic residues. Ser-93 bears the Phosphoserine mark. Residue Lys-101 forms a Glycyl lysine isopeptide (Lys-Gly) (interchain with G-Cter in SUMO1); alternate linkage. Lys-101 participates in a covalent cross-link: Glycyl lysine isopeptide (Lys-Gly) (interchain with G-Cter in SUMO2); alternate. Lys-124 is covalently cross-linked (Glycyl lysine isopeptide (Lys-Gly) (interchain with G-Cter in SUMO2)). Residues 125–138 (NEEEDQKEDEEDQN) are compositionally biased toward acidic residues. Composition is skewed to basic and acidic residues over residues 139-152 (EEKGEAGKEDKDEK) and 158-256 (KEDK…KEDL). The span at 257–270 (KEEEEGKEEDEIKE) shows a compositional bias: acidic residues. The span at 271 to 282 (DDGKKEEPQSIV) shows a compositional bias: basic and acidic residues.

The protein belongs to the HMGN family. In terms of tissue distribution, ubiquitously expressed.

It is found in the nucleus. Functionally, preferentially binds to euchromatin and modulates cellular transcription by counteracting linker histone-mediated chromatin compaction. The protein is High mobility group nucleosome-binding domain-containing protein 5 (HMGN5) of Homo sapiens (Human).